The primary structure comprises 426 residues: 3-phosphoshikimate 1-carboxyvinyltransferase (426 aa).

3-phosphoshikimate contacts are provided by lysine 22, serine 23, and arginine 27. Lysine 22 lines the phosphoenolpyruvate pocket. Phosphoenolpyruvate contacts are provided by glycine 96 and arginine 124. 7 residues coordinate 3-phosphoshikimate: serine 170, serine 171, glutamine 172, serine 198, aspartate 314, asparagine 337, and lysine 341. Residue glutamine 172 participates in phosphoenolpyruvate binding. The active-site Proton acceptor is aspartate 314. Phosphoenolpyruvate-binding residues include arginine 345, arginine 387, and lysine 412.

Belongs to the EPSP synthase family. Monomer.

It localises to the cytoplasm. It catalyses the reaction 3-phosphoshikimate + phosphoenolpyruvate = 5-O-(1-carboxyvinyl)-3-phosphoshikimate + phosphate. It participates in metabolic intermediate biosynthesis; chorismate biosynthesis; chorismate from D-erythrose 4-phosphate and phosphoenolpyruvate: step 6/7. Functionally, catalyzes the transfer of the enolpyruvyl moiety of phosphoenolpyruvate (PEP) to the 5-hydroxyl of shikimate-3-phosphate (S3P) to produce enolpyruvyl shikimate-3-phosphate and inorganic phosphate. This is 3-phosphoshikimate 1-carboxyvinyltransferase from Shewanella woodyi (strain ATCC 51908 / MS32).